The sequence spans 100 residues: Large ribosomal subunit protein uL23 (100 aa).

The protein belongs to the universal ribosomal protein uL23 family. In terms of assembly, part of the 50S ribosomal subunit. Contacts protein L29, and trigger factor when it is bound to the ribosome.

Functionally, one of the early assembly proteins it binds 23S rRNA. One of the proteins that surrounds the polypeptide exit tunnel on the outside of the ribosome. Forms the main docking site for trigger factor binding to the ribosome. In Vibrio atlanticus (strain LGP32) (Vibrio splendidus (strain Mel32)), this protein is Large ribosomal subunit protein uL23.